The primary structure comprises 3797 residues: A-kinase anchor protein 9 (3797 aa).

The disordered stretch occupies residues 1-140 (MEDEERQRKL…SSEQGAQSSQ (140 aa)). Polar residues-rich tracts occupy residues 50–65 (HTDQQSGELCSESSQR) and 92–108 (EISTTADECSSEINGCN). Positions 115–124 (KPTDPLREEE) are enriched in basic and acidic residues. At Ser139 the chain carries Phosphoserine. Coiled-coil stretches lie at residues 140–607 (QTCL…LRTQ) and 640–976 (IHYK…LLAN). At Ser1288 the chain carries Phosphoserine. Disordered regions lie at residues 1643–1668 (STQTQDGHDDQEVEEQTLKDKTLERS), 2323–2343 (VVSTEQQREGARTLPEDEESF), and 2419–2454 (SDNLQPEDAPAQDVTKPLEKQTSLTRLQESPEASRT). Composition is skewed to basic and acidic residues over residues 1648 to 1668 (DGHDDQEVEEQTLKDKTLERS) and 2328 to 2343 (QQREGARTLPEDEESF). Positions 1808-2377 (SRLQAAVEKL…MTHMNNVLKE (570 aa)) form a coiled coil. Polar residues predominate over residues 2438–2454 (KQTSLTRLQESPEASRT). Positions 2498–2510 (DLQRSLEKFAAAL) are PKA-RII subunit binding domain. Disordered regions lie at residues 2604-2695 (LEEA…SSSG) and 3271-3296 (MEKDRQVHQKTLQTEQEANTQGQKKM). The segment covering 2606–2615 (EAEERPEEGG) has biased composition (acidic residues). Basic and acidic residues predominate over residues 2642-2669 (PLTEAKEKLSYSLEKEKRTGEQESREAP). Residues 2975–3325 (LQKADRRSLL…QVYKLDLEGK (351 aa)) are a coiled coil. The span at 3279–3294 (QKTLQTEQEANTQGQK) shows a compositional bias: polar residues. Phosphoserine is present on residues Ser3732, Ser3755, and Ser3787.

In terms of assembly, interacts with the regulatory region of protein kinase N (PKN), protein phosphatase 2A (PP2A), protein phosphatase 1 (PP1) and the immature non-phosphorylated form of PKC epsilon. Interacts with CIP4 and FNBP1. Interacts with chloride intracellular channel proteins CLIC1, CLIC4 and CLIC5. CSNK1D binding promotes its centrosomal subcellular location. Interacts with GM130/GOLGA2; leading to recruitment to the Golgi apparatus. Interacts with KCNQ1; targets protein kinase A (PKA) catalytic and regulatory subunits and protein phosphatase 1 (PP1), to the heterodimer KCNQ1-KCNE1. Interacts with PDE4DIP isoform 2; this interaction stabilizes both proteins. In complex with PDE4DIP isoform 2, recruits CAMSAP2 to the Golgi apparatus. Forms a pericentrosomal complex with CDK5RAP2, EB1/MAPRE1 and PDE4DIP isoform 2; within this complex, MAPRE1 binding to CDK5RAP2 may be mediated by PDE4DIP. Interacts with MAPRE1 and MAPRE3. Interacts (via C-terminus) with CAMSAP2; this interaction is much stronger in the presence of PDE4DIP isoform 2. Interacts with CAMSAP3. Interacts (via C-terminus) with the gamma-tubulin ring complex (gamma-TuRC), composed of gamma-tubulin, TUBGCP2, TUBGCP3, TUBGCP4, TUBGCP5 and TUBGCP6.

It is found in the golgi apparatus. Its subcellular location is the cytoplasm. It localises to the cytoskeleton. The protein resides in the microtubule organizing center. The protein localises to the centrosome. Functionally, scaffolding protein that assembles several protein kinases and phosphatases on the centrosome and Golgi apparatus. Required to maintain the integrity of the Golgi apparatus. Required for microtubule nucleation at the cis-side of the Golgi apparatus. Required for association of the centrosomes with the poles of the bipolar mitotic spindle during metaphase. In complex with PDE4DIP isoform 2/MMG8/SMYLE, recruits CAMSAP2 to the Golgi apparatus and tethers non-centrosomal minus-end microtubules to the Golgi, an important step for polarized cell movement. In complex with PDE4DIP isoform 2, EB1/MAPRE1 and CDK5RAP2, contributes to microtubules nucleation and extension also from the centrosome to the cell periphery. The polypeptide is A-kinase anchor protein 9 (Akap9) (Mus musculus (Mouse)).